Here is a 201-residue protein sequence, read N- to C-terminus: Protein GrpE (201 aa).

The segment covering 1–11 (MTDSTNNQGTS) has biased composition (polar residues). The segment at 1–40 (MTDSTNNQGTSGRPDDDHTTEEVASVFNDPGAQAPAGEPD) is disordered.

Belongs to the GrpE family. Homodimer.

It is found in the cytoplasm. In terms of biological role, participates actively in the response to hyperosmotic and heat shock by preventing the aggregation of stress-denatured proteins, in association with DnaK and GrpE. It is the nucleotide exchange factor for DnaK and may function as a thermosensor. Unfolded proteins bind initially to DnaJ; upon interaction with the DnaJ-bound protein, DnaK hydrolyzes its bound ATP, resulting in the formation of a stable complex. GrpE releases ADP from DnaK; ATP binding to DnaK triggers the release of the substrate protein, thus completing the reaction cycle. Several rounds of ATP-dependent interactions between DnaJ, DnaK and GrpE are required for fully efficient folding. The sequence is that of Protein GrpE from Beijerinckia indica subsp. indica (strain ATCC 9039 / DSM 1715 / NCIMB 8712).